The sequence spans 218 residues: Response regulator UvrY (218 aa).

Positions 3–119 constitute a Response regulatory domain; it reads NVLLVDDHEL…EVVSAIRSVY (117 aa). Position 54 is a 4-aspartylphosphate (aspartate 54). The region spanning 143–208 is the HTH luxR-type domain; it reads TESPFASLSE…ELTHLAIRHG (66 aa). A DNA-binding region (H-T-H motif) is located at residues 167–186; sequence VNEISEQLNLSPKTVNSYRY.

Phosphorylated and activated by BarA.

The protein resides in the cytoplasm. In terms of biological role, member of the two-component regulatory system UvrY/BarA involved in the regulation of carbon metabolism via the CsrA/CsrB regulatory system. UvrY activates the transcription of the untranslated csrB RNA and of barA, in an autoregulatory loop. Mediates the effects of CsrA on csrB RNA by BarA-dependent and BarA-independent mechanisms. The polypeptide is Response regulator UvrY (uvrY) (Escherichia coli (strain K12)).